We begin with the raw amino-acid sequence, 66 residues long: DNA-directed RNA polymerase subunit omega (66 aa).

It belongs to the RNA polymerase subunit omega family. In terms of assembly, the RNAP catalytic core consists of 2 alpha, 1 beta, 1 beta' and 1 omega subunit. When a sigma factor is associated with the core the holoenzyme is formed, which can initiate transcription.

The enzyme catalyses RNA(n) + a ribonucleoside 5'-triphosphate = RNA(n+1) + diphosphate. Functionally, promotes RNA polymerase assembly. Latches the N- and C-terminal regions of the beta' subunit thereby facilitating its interaction with the beta and alpha subunits. This chain is DNA-directed RNA polymerase subunit omega, found in Bacillus licheniformis (strain ATCC 14580 / DSM 13 / JCM 2505 / CCUG 7422 / NBRC 12200 / NCIMB 9375 / NCTC 10341 / NRRL NRS-1264 / Gibson 46).